A 107-amino-acid polypeptide reads, in one-letter code: Immunoglobulin kappa constant (107 aa).

Residues Pro-6 to Asn-103 enclose the Ig-like domain. Cys-27 and Cys-87 are joined by a disulfide.

This is Immunoglobulin kappa constant from Mus musculus (Mouse).